A 474-amino-acid chain; its full sequence is CUGBP Elav-like family member 4 (474 aa).

The tract at residues 1–287 (MYIKMATLAN…AAFAAAQMQQ (287 aa)) is sufficient for RNA-binding and MSE-dependent splicing activity. Residues 18–28 (LSTNGLGSSPG) are compositionally biased toward polar residues. Positions 18-41 (LSTNGLGSSPGSAGHMNGLSHSPG) are disordered. 2 RRM domains span residues 54 to 135 (IKLF…PADS) and 141 to 221 (RKLF…FADT). The interval 228-247 (RRMQQMAGQMGMFNPMAIPF) is necessary for TNNT2 exon 5 inclusion. Residues 392 to 467 (PQPPPMIPQQ…KRLKVQLKRP (76 aa)) enclose the RRM 3 domain.

It belongs to the CELF/BRUNOL family.

It localises to the nucleus. The protein resides in the cytoplasm. Its function is as follows. RNA-binding protein implicated in the regulation of pre-mRNA alternative splicing. Mediates exon inclusion and/or exclusion in pre-mRNA that are subject to tissue-specific and developmentally regulated alternative splicing. Specifically activates exon 5 inclusion of cardiac isoforms of TNNT2 during heart remodeling at the juvenile to adult transition. Promotes exclusion of both the smooth muscle (SM) and non-muscle (NM) exons in actinin pre-mRNAs. Activates the splicing of MAPT/Tau exon 10. Binds to muscle-specific splicing enhancer (MSE) intronic sites flanking the alternative exon 5 of TNNT2 pre-mRNA. The protein is CUGBP Elav-like family member 4 (CELF4) of Macaca fascicularis (Crab-eating macaque).